Reading from the N-terminus, the 885-residue chain is Alanine--tRNA ligase (885 aa).

Zn(2+)-binding residues include histidine 564, histidine 568, cysteine 676, and histidine 680.

Belongs to the class-II aminoacyl-tRNA synthetase family. Requires Zn(2+) as cofactor.

The protein resides in the cytoplasm. The enzyme catalyses tRNA(Ala) + L-alanine + ATP = L-alanyl-tRNA(Ala) + AMP + diphosphate. Catalyzes the attachment of alanine to tRNA(Ala) in a two-step reaction: alanine is first activated by ATP to form Ala-AMP and then transferred to the acceptor end of tRNA(Ala). Also edits incorrectly charged Ser-tRNA(Ala) and Gly-tRNA(Ala) via its editing domain. The chain is Alanine--tRNA ligase from Brucella ovis (strain ATCC 25840 / 63/290 / NCTC 10512).